Here is an 88-residue protein sequence, read N- to C-terminus: Small ribosomal subunit protein uS17 (88 aa).

The protein belongs to the universal ribosomal protein uS17 family. Part of the 30S ribosomal subunit.

Functionally, one of the primary rRNA binding proteins, it binds specifically to the 5'-end of 16S ribosomal RNA. The polypeptide is Small ribosomal subunit protein uS17 (Lactobacillus delbrueckii subsp. bulgaricus (strain ATCC 11842 / DSM 20081 / BCRC 10696 / JCM 1002 / NBRC 13953 / NCIMB 11778 / NCTC 12712 / WDCM 00102 / Lb 14)).